The sequence spans 338 residues: MSTLRLLISDSYDPWFNLAVEECIFRQMPATQRVLFLWRNADTVVIGRAQNPWKECNTRRMEEDNVRLARRSSGGGAVFHDLGNTCFTFMAGKPEYDKTISTSIVLNALNALGVSAEASGRNDLVVKTAEGDRKVSGSAYRETKDRGFHHGTLLLNSDLSRLANYLNPDKKKLAAKGITSVRSRVTNLTELLPGITHEQVCEAITEAFFAHYGERVEAEIISPDKTPDLPNFAETFARQSSWEWNFGQAPEFSHLLDERFTWGGVELHFDVEKGHITRAQVFTDSLNPAPLEALAGRLQGCLYRADMLQQECEALLVDFPEQEKELRELSAWIAGAVR.

A BPL/LPL catalytic domain is found at 29-216; sequence PATQRVLFLW…AFFAHYGERV (188 aa). ATP is bound by residues Arg-71, 76–79, and Lys-134; that span reads GAVF. Residue Lys-134 participates in (R)-lipoate binding.

Belongs to the LplA family. As to quaternary structure, monomer.

The protein localises to the cytoplasm. The enzyme catalyses L-lysyl-[lipoyl-carrier protein] + (R)-lipoate + ATP = N(6)-[(R)-lipoyl]-L-lysyl-[lipoyl-carrier protein] + AMP + diphosphate + H(+). It participates in protein modification; protein lipoylation via exogenous pathway; protein N(6)-(lipoyl)lysine from lipoate: step 1/2. Its pathway is protein modification; protein lipoylation via exogenous pathway; protein N(6)-(lipoyl)lysine from lipoate: step 2/2. Catalyzes both the ATP-dependent activation of exogenously supplied lipoate to lipoyl-AMP and the transfer of the activated lipoyl onto the lipoyl domains of lipoate-dependent enzymes. The polypeptide is Lipoate-protein ligase A (Escherichia coli O81 (strain ED1a)).